Here is a 79-residue protein sequence, read N- to C-terminus: Putative membrane protein insertion efficiency factor (79 aa).

The protein belongs to the UPF0161 family.

Its subcellular location is the cell inner membrane. Functionally, could be involved in insertion of integral membrane proteins into the membrane. The polypeptide is Putative membrane protein insertion efficiency factor (Thermotoga neapolitana (strain ATCC 49049 / DSM 4359 / NBRC 107923 / NS-E)).